We begin with the raw amino-acid sequence, 555 residues long: Suppressor of tumorigenicity 7 protein-like (555 aa).

The next 2 membrane-spanning stretches (helical) occupy residues 36–56 (GLAGTGASLWFVAGLGLLYAL) and 80–100 (FYVALTGTSSLISGLIFIFEW). A disordered region spans residues 126 to 148 (TESSISEPGSPSNNRESETSRQN).

This sequence belongs to the ST7 family.

The protein resides in the membrane. The chain is Suppressor of tumorigenicity 7 protein-like (ST7L) from Bos taurus (Bovine).